The primary structure comprises 269 residues: Mitochondrial acidic protein mam33 (269 aa).

It belongs to the MAM33 family.

Its subcellular location is the cytoplasm. The protein localises to the mitochondrion matrix. The polypeptide is Mitochondrial acidic protein mam33 (Schizosaccharomyces pombe (strain 972 / ATCC 24843) (Fission yeast)).